The following is a 357-amino-acid chain: Phosphoribosylformylglycinamidine cyclo-ligase (357 aa).

Belongs to the AIR synthase family.

It localises to the cytoplasm. The catalysed reaction is 2-formamido-N(1)-(5-O-phospho-beta-D-ribosyl)acetamidine + ATP = 5-amino-1-(5-phospho-beta-D-ribosyl)imidazole + ADP + phosphate + H(+). It functions in the pathway purine metabolism; IMP biosynthesis via de novo pathway; 5-amino-1-(5-phospho-D-ribosyl)imidazole from N(2)-formyl-N(1)-(5-phospho-D-ribosyl)glycinamide: step 2/2. This chain is Phosphoribosylformylglycinamidine cyclo-ligase, found in Rhodopseudomonas palustris (strain BisB18).